Consider the following 619-residue polypeptide: Keratin, type II cytoskeletal 1 (619 aa).

A head region spans residues 1-180; that stretch reads MSRHFSSRSG…DPEIQKVKTR (180 aa). The residue at position 12 (R12) is an Omega-N-methylarginine. Phosphoserine is present on residues S18 and S21. The disordered stretch occupies residues 28-49; that stretch reads QRRTTSSSVRHSGGGGGRFSGG. The span at 39 to 49 shows a compositional bias: gly residues; sequence SGGGGGRFSGG. Omega-N-methylarginine is present on R45. Residue S68 is modified to Phosphoserine. The stretch at 173 to 477 forms a coiled coil; that stretch reads EIQKVKTRER…ELMNTKLALD (305 aa). The segment at 181–216 is coil 1A; the sequence is EREQIKSLNNQFASFIDKVRFLEQQNQVLQTKWELL. The IF rod domain occupies 181–494; it reads EREQIKSLNN…TLLEGEESRM (314 aa). The linker 1 stretch occupies residues 217–235; sequence QQVDTSTRTHSLEPYFENY. Residues 236–327 form a coil 1B region; sequence ISNLRRRVDQ…TLYQAELSQM (92 aa). N6,N6-dimethyllysine is present on K277. Residues 328-351 are linker 12; sequence QTQISETNVILSMDNNRSLDLDSI. S345 carries the phosphoserine modification. Positions 352-490 are coil 2; the sequence is ISEVKAQYEE…ATYRTLLEGE (139 aa). Residues 491–619 form a tail region; that stretch reads ESRMSGECAP…VSTSYSRAVR (129 aa). An omega-N-methylarginine mark is found at R519 and R575. The interval 559–619 is disordered; it reads GGGGGGYGSS…VSTSYSRAVR (61 aa). Gly residues predominate over residues 573–595; it reads GHRGGSGGGSRSGGSSGGRGSSS. Positions 596-606 are enriched in low complexity; sequence GGIKTSSGSSS. Residues 607 to 619 show a composition bias toward polar residues; it reads VKFVSTSYSRAVR.

It belongs to the intermediate filament family. As to quaternary structure, heterotetramer of two type I and two type II keratins. Heterodimer with KRT10. Two heterodimers of KRT1 and KRT10 form a heterotetramer. Forms a heterodimer with KRT14; the interaction is more abundant in the absence of KRT5. Interacts with ITGB1 in the presence of RACK1 and SRC, and with RACK1. Interacts with C1QBP; the association represents a cell surface kininogen receptor. Interacts with EPPK1; interaction is dependent of higher-order structure of intermediate filament. In terms of processing, undergoes deimination of some arginine residues (citrullination).

Its subcellular location is the cell membrane. The protein resides in the cytoplasm. May regulate the activity of kinases such as PKC and SRC via binding to integrin beta-1 (ITB1) and the receptor of activated protein C kinase 1 (RACK1). In complex with C1QBP is a high affinity receptor for kininogen-1/HMWK. The chain is Keratin, type II cytoskeletal 1 from Canis lupus familiaris (Dog).